The chain runs to 249 residues: Derlin-2 (249 aa).

The Cytoplasmic portion of the chain corresponds to 1-21; it reads MAQAVEEWYRQMPIITRSYLT. Residues 22 to 42 form a helical membrane-spanning segment; it reads AAVVTTVGCTLEIISPYHLYL. Residues 43–96 lie on the Lumenal side of the membrane; it reads NPKLVVQHYEIWRLVTNFLYFRKMDLDFLFHMFFLARYCKLLEENSFRGRTADF. Residues 97–117 traverse the membrane as a helical segment; sequence FYMLLFGATVLTGIVLIGGMI. The Cytoplasmic portion of the chain corresponds to 118–122; that stretch reads PYISE. A helical membrane pass occupies residues 123–143; that stretch reads TFARILFLSNSLTFMMVYVWS. The Lumenal portion of the chain corresponds to 144–152; sequence KHNPFIHMS. The helical transmembrane segment at 153 to 173 threads the bilayer; it reads FLGLFTFTAAYLPWVLLGFSI. The Cytoplasmic portion of the chain corresponds to 174 to 249; the sequence is LVGSSTWVDL…GAMGADPQAQ (76 aa).

This sequence belongs to the derlin family.

The protein resides in the endoplasmic reticulum membrane. May be involved in the degradation process of specific misfolded endoplasmic reticulum (ER) luminal proteins. The sequence is that of Derlin-2 (DER2) from Oryza sativa subsp. japonica (Rice).